The following is a 1131-amino-acid chain: Homeobox-DDT domain protein RLT3 (1131 aa).

The homeobox; TALE-type DNA-binding region spans 2–56 (KRKSPLQVQALEGFYLEQMYPTPKEMEDLGKSLGLTLKEVRGWFKRRRSRGKGVK). Over residues 239 to 251 (LQKRSTEKKRRSI) the composition is skewed to basic residues. The interval 239 to 264 (LQKRSTEKKRRSIHREAELNKDETQR) is disordered. Residues 252 to 264 (HREAELNKDETQR) are compositionally biased toward basic and acidic residues. Residues 365–424 (PESVKKLFKVVHFLYTYSVTLDIGPFTLDEFTRAFHDKDSLLLGKIHLSLLKLLLLDVET) enclose the DDT domain. The disordered stretch occupies residues 579–609 (EDPDKSQSDSDDSGSVDDESDDCSISSGDEI). Over residues 587-600 (DSDDSGSVDDESDD) the composition is skewed to acidic residues.

It is found in the nucleus. Transcriptional regulator required for the maintenance of the plant vegetative phase. May prevent the early activation of the vegetative-to-reproductive transition by regulating key genes that contribute to flower timing. The polypeptide is Homeobox-DDT domain protein RLT3 (Arabidopsis thaliana (Mouse-ear cress)).